The sequence spans 476 residues: Acyl-lipid omega-13 desaturase (476 aa).

One can recognise a Cytochrome b5 heme-binding domain in the interval 10–75 (GPALPSIPHQ…HLRVLERFRV (66 aa)). 2 residues coordinate heme: histidine 37 and histidine 60. A run of 2 helical transmembrane segments spans residues 146–166 (PFVILHCLHVVGLIWSMKLWW) and 168–188 (GAFISAFILPYFLWVLCAAMV). The short motif at 189–193 (HDGGH) is the Histidine box-1 element. Positions 224-229 (HNILHH) match the Histidine box-2 motif. Transmembrane regions (helical) follow at residues 267-287 (FFSHLIMYNFAHIGLTMISPL), 315-335 (YHSTVMLQLVTVGAFYITPFL), and 343-363 (LLLTLLPTFMMSVAFMVIAQV). Positions 410-414 (QSLHH) match the Histidine box-3 motif.

Belongs to the fatty acid desaturase type 1 family.

Its subcellular location is the membrane. It catalyses the reaction a (9Z,12Z)-octadecadienoyl-containing glycerolipid + 2 Fe(II)-[cytochrome b5] + O2 + 2 H(+) = a (5Z,9Z,12Z)-octadecatrienoyl-containing glycerolipid + 2 Fe(III)-[cytochrome b5] + 2 H2O. The enzyme catalyses (9Z,12Z,15Z)-octadecatrienoyl-containing glycerolipid + 2 Fe(II)-[cytochrome b5] + O2 + 2 H(+) = a (5Z,9Z,12Z,15Z)-octadecatetraenoyl-containing glycerolipid + 2 Fe(III)-[cytochrome b5] + 2 H2O. It functions in the pathway lipid metabolism; polyunsaturated fatty acid biosynthesis. Functionally, front-end desaturase having a omega-13 desaturase activity for omega-9 unsaturated C18/C20 fatty acids. Strong substrate preferences for linoleic acid and alpha-linolenic acid for the production of pinolenic and coniferonic acids respectively. No desaturase activity for dihomo gamma-linolenic acid and eicosatertraenoic acid. The sequence is that of Acyl-lipid omega-13 desaturase from Chlamydomonas reinhardtii (Chlamydomonas smithii).